We begin with the raw amino-acid sequence, 263 residues long: Glutamate racemase (263 aa).

Residues Asp-13 to Ser-14 and Tyr-45 to Gly-46 contribute to the substrate site. The Proton donor/acceptor role is filled by Cys-77. Asn-78–Thr-79 contacts substrate. Cys-185 serves as the catalytic Proton donor/acceptor. Thr-186–His-187 provides a ligand contact to substrate.

Belongs to the aspartate/glutamate racemases family.

It catalyses the reaction L-glutamate = D-glutamate. It functions in the pathway cell wall biogenesis; peptidoglycan biosynthesis. In terms of biological role, provides the (R)-glutamate required for cell wall biosynthesis. This is Glutamate racemase from Vibrio vulnificus (strain YJ016).